Consider the following 316-residue polypeptide: 4-hydroxy-3-methylbut-2-enyl diphosphate reductase (316 aa).

Residue Cys17 participates in [4Fe-4S] cluster binding. His46 and His79 together coordinate (2E)-4-hydroxy-3-methylbut-2-enyl diphosphate. Positions 46 and 79 each coordinate dimethylallyl diphosphate. Residues His46 and His79 each coordinate isopentenyl diphosphate. Cys101 serves as a coordination point for [4Fe-4S] cluster. His129 serves as a coordination point for (2E)-4-hydroxy-3-methylbut-2-enyl diphosphate. His129 contacts dimethylallyl diphosphate. His129 provides a ligand contact to isopentenyl diphosphate. Residue Glu131 is the Proton donor of the active site. Position 170 (Thr170) interacts with (2E)-4-hydroxy-3-methylbut-2-enyl diphosphate. Cys200 provides a ligand contact to [4Fe-4S] cluster. Residues Ser228, Ser229, Asn230, and Ser273 each contribute to the (2E)-4-hydroxy-3-methylbut-2-enyl diphosphate site. The dimethylallyl diphosphate site is built by Ser228, Ser229, Asn230, and Ser273. 4 residues coordinate isopentenyl diphosphate: Ser228, Ser229, Asn230, and Ser273.

The protein belongs to the IspH family. Requires [4Fe-4S] cluster as cofactor.

The catalysed reaction is isopentenyl diphosphate + 2 oxidized [2Fe-2S]-[ferredoxin] + H2O = (2E)-4-hydroxy-3-methylbut-2-enyl diphosphate + 2 reduced [2Fe-2S]-[ferredoxin] + 2 H(+). The enzyme catalyses dimethylallyl diphosphate + 2 oxidized [2Fe-2S]-[ferredoxin] + H2O = (2E)-4-hydroxy-3-methylbut-2-enyl diphosphate + 2 reduced [2Fe-2S]-[ferredoxin] + 2 H(+). Its pathway is isoprenoid biosynthesis; dimethylallyl diphosphate biosynthesis; dimethylallyl diphosphate from (2E)-4-hydroxy-3-methylbutenyl diphosphate: step 1/1. It functions in the pathway isoprenoid biosynthesis; isopentenyl diphosphate biosynthesis via DXP pathway; isopentenyl diphosphate from 1-deoxy-D-xylulose 5-phosphate: step 6/6. Functionally, catalyzes the conversion of 1-hydroxy-2-methyl-2-(E)-butenyl 4-diphosphate (HMBPP) into a mixture of isopentenyl diphosphate (IPP) and dimethylallyl diphosphate (DMAPP). Acts in the terminal step of the DOXP/MEP pathway for isoprenoid precursor biosynthesis. The protein is 4-hydroxy-3-methylbut-2-enyl diphosphate reductase of Ruegeria pomeroyi (strain ATCC 700808 / DSM 15171 / DSS-3) (Silicibacter pomeroyi).